Reading from the N-terminus, the 414-residue chain is uncharacterized protein (414 aa).

Residues glutamate 246 to arginine 360 enclose the Nop domain. Residues isoleucine 358–lysine 414 form a disordered region. The segment covering lysine 361 to lysine 414 has biased composition (basic residues).

The protein belongs to the NOP5/NOP56 family.

This is an uncharacterized protein from Methanocaldococcus jannaschii (strain ATCC 43067 / DSM 2661 / JAL-1 / JCM 10045 / NBRC 100440) (Methanococcus jannaschii).